Reading from the N-terminus, the 783-residue chain is Endonuclease MutS2 (783 aa).

G333 to T340 lines the ATP pocket. A Smr domain is found at I708–K783.

The protein belongs to the DNA mismatch repair MutS family. MutS2 subfamily. As to quaternary structure, homodimer. Binds to stalled ribosomes, contacting rRNA.

Endonuclease that is involved in the suppression of homologous recombination and thus may have a key role in the control of bacterial genetic diversity. In terms of biological role, acts as a ribosome collision sensor, splitting the ribosome into its 2 subunits. Detects stalled/collided 70S ribosomes which it binds and splits by an ATP-hydrolysis driven conformational change. Acts upstream of the ribosome quality control system (RQC), a ribosome-associated complex that mediates the extraction of incompletely synthesized nascent chains from stalled ribosomes and their subsequent degradation. Probably generates substrates for RQC. The sequence is that of Endonuclease MutS2 from Finegoldia magna (strain ATCC 29328 / DSM 20472 / WAL 2508) (Peptostreptococcus magnus).